We begin with the raw amino-acid sequence, 268 residues long: Imidazole glycerol phosphate synthase subunit HisF (268 aa).

Active-site residues include D12 and D131.

This sequence belongs to the HisA/HisF family. Heterodimer of HisH and HisF.

The protein localises to the cytoplasm. The enzyme catalyses 5-[(5-phospho-1-deoxy-D-ribulos-1-ylimino)methylamino]-1-(5-phospho-beta-D-ribosyl)imidazole-4-carboxamide + L-glutamine = D-erythro-1-(imidazol-4-yl)glycerol 3-phosphate + 5-amino-1-(5-phospho-beta-D-ribosyl)imidazole-4-carboxamide + L-glutamate + H(+). The protein operates within amino-acid biosynthesis; L-histidine biosynthesis; L-histidine from 5-phospho-alpha-D-ribose 1-diphosphate: step 5/9. Functionally, IGPS catalyzes the conversion of PRFAR and glutamine to IGP, AICAR and glutamate. The HisF subunit catalyzes the cyclization activity that produces IGP and AICAR from PRFAR using the ammonia provided by the HisH subunit. This is Imidazole glycerol phosphate synthase subunit HisF from Chelativorans sp. (strain BNC1).